The following is a 414-amino-acid chain: Serine hydroxymethyltransferase (414 aa).

Residues L121 and 125 to 127 contribute to the (6S)-5,6,7,8-tetrahydrofolate site; that span reads GHL. K229 is subject to N6-(pyridoxal phosphate)lysine.

Belongs to the SHMT family. As to quaternary structure, homodimer. It depends on pyridoxal 5'-phosphate as a cofactor.

It localises to the cytoplasm. The enzyme catalyses (6R)-5,10-methylene-5,6,7,8-tetrahydrofolate + glycine + H2O = (6S)-5,6,7,8-tetrahydrofolate + L-serine. Its pathway is one-carbon metabolism; tetrahydrofolate interconversion. It participates in amino-acid biosynthesis; glycine biosynthesis; glycine from L-serine: step 1/1. In terms of biological role, catalyzes the reversible interconversion of serine and glycine with tetrahydrofolate (THF) serving as the one-carbon carrier. This reaction serves as the major source of one-carbon groups required for the biosynthesis of purines, thymidylate, methionine, and other important biomolecules. Also exhibits THF-independent aldolase activity toward beta-hydroxyamino acids, producing glycine and aldehydes, via a retro-aldol mechanism. The sequence is that of Serine hydroxymethyltransferase from Paracidovorax citrulli (strain AAC00-1) (Acidovorax citrulli).